The chain runs to 363 residues: Zinc phosphodiesterase ELAC protein 1 (363 aa).

Zn(2+) contacts are provided by histidine 62, histidine 64, aspartate 66, histidine 67, histidine 182, aspartate 253, and histidine 313. Aspartate 66 functions as the Proton acceptor in the catalytic mechanism.

Belongs to the RNase Z family. As to quaternary structure, homodimer. Requires Zn(2+) as cofactor. As to expression, widely expressed. Expressed in heart, brain, placenta, lung, liver, skeletal muscle, kidney and pancreas.

Its subcellular location is the cytoplasm. The protein resides in the cytosol. It localises to the nucleus. The enzyme catalyses Endonucleolytic cleavage of RNA, removing extra 3' nucleotides from tRNA precursor, generating 3' termini of tRNAs. A 3'-hydroxy group is left at the tRNA terminus and a 5'-phosphoryl group is left at the trailer molecule.. Zinc phosphodiesterase, which displays some tRNA 3'-processing endonuclease activity. Specifically involved in tRNA repair: acts downstream of the ribosome-associated quality control (RQC) pathway by removing a 2',3'-cyclic phosphate from tRNAs following cleavage by ANKZF1. tRNAs are then processed by TRNT1. The sequence is that of Zinc phosphodiesterase ELAC protein 1 from Homo sapiens (Human).